The primary structure comprises 97 residues: Citrate lyase acyl carrier protein (97 aa).

The residue at position 14 (Ser14) is an O-(phosphoribosyl dephospho-coenzyme A)serine.

It belongs to the CitD family. Oligomer with a subunit composition of (alpha,beta,gamma)6.

Its subcellular location is the cytoplasm. In terms of biological role, covalent carrier of the coenzyme of citrate lyase. The protein is Citrate lyase acyl carrier protein of Rhodopseudomonas palustris (strain BisA53).